Here is a 668-residue protein sequence, read N- to C-terminus: Metal reductase (668 aa).

FMN contacts are provided by residues 23 to 25 (PMH), Gly57, Gln98, Arg216, Arg290, and 312 to 313 (AR). 2 residues coordinate [4Fe-4S] cluster: Cys336 and Cys339. Gln341 contacts FAD. The [4Fe-4S] cluster site is built by Cys343 and Cys355. 5 residues coordinate FAD: Ala386, Glu405, Gln413, Arg423, and Ala450.

This sequence in the N-terminal section; belongs to the NADH:flavin oxidoreductase/NADH oxidase family. In terms of assembly, homotetramer. FMN serves as cofactor. It depends on FAD as a cofactor. [4Fe-4S] cluster is required as a cofactor.

The protein resides in the cytoplasm. Metal reductase able to reduce Fe(III)-chelates to Fe(II)-chelates, as well as soluble Cr(VI) and U(VI), using NADH as electron donor. Cannot use NADPH as an electron donor. Is unable to reduce riboflavin and FMN with NADH as electron donor. May have an in vivo role in metal reduction in D.reducens, which is an organism capable of reducing contaminant heavy metals and radionuclides. This chain is Metal reductase, found in Desulforamulus reducens (strain ATCC BAA-1160 / DSM 100696 / MI-1) (Desulfotomaculum reducens).